The primary structure comprises 125 residues: Small ribosomal subunit protein uS12c (125 aa).

This sequence belongs to the universal ribosomal protein uS12 family. Part of the 30S ribosomal subunit.

Its subcellular location is the plastid. It is found in the chloroplast. Functionally, with S4 and S5 plays an important role in translational accuracy. Located at the interface of the 30S and 50S subunits. In Nephroselmis olivacea (Green alga), this protein is Small ribosomal subunit protein uS12c (rps12).